The sequence spans 761 residues: Neurotrypsin (761 aa).

The signal sequence occupies residues Met1–Ala21. Residues Ser25 to Ala87 are disordered. Over residues Arg38–Ser48 the composition is skewed to low complexity. Residues Cys85–Cys157 form the Kringle domain. 17 disulfides stabilise this stretch: Cys85–Cys157, Cys101–Cys141, Cys130–Cys155, Cys191–Cys255, Cys204–Cys265, Cys235–Cys245, Cys298–Cys361, Cys311–Cys371, Cys341–Cys351, Cys411–Cys475, Cys424–Cys485, Cys455–Cys465, Cys505–Cys636, Cys547–Cys563, Cys651–Cys717, Cys680–Cys694, and Cys707–Cys736. Residue Asn93 is glycosylated (N-linked (GlcNAc...) asparagine). 3 SRCR domains span residues Ile166–Pro267, Ile273–Pro373, and Ile386–Tyr487. The tract at residues Cys505–Arg516 is zymogen activation region. Residues Ile517 to Ser760 form the Peptidase S1 domain. Asn521 carries an N-linked (GlcNAc...) asparagine glycan. The active-site Charge relay system is the His562. N-linked (GlcNAc...) asparagine glycosylation is present at Asn569. Asp612 functions as the Charge relay system in the catalytic mechanism. The active-site Charge relay system is Ser711.

It belongs to the peptidase S1 family. As to expression, most abundant in cerebral cortex, hippocampus and amygdala.

It is found in the secreted. In terms of biological role, plays a role in neuronal plasticity and the proteolytic action may subserve structural reorganizations associated with learning and memory operations. The protein is Neurotrypsin (Prss12) of Mus musculus (Mouse).